The sequence spans 198 residues: Na(+)-translocating NADH-quinone reductase subunit E (198 aa).

6 helical membrane-spanning segments follow: residues 11 to 31 (AVFV…FLAV), 35 to 55 (VSTA…SVPA), 77 to 97 (FLNF…LEMI), 109 to 129 (LGIF…VSFM), 140 to 160 (IVYG…LAGI), and 176 to 196 (LGIT…FAGV).

The protein belongs to the NqrDE/RnfAE family. Composed of six subunits; NqrA, NqrB, NqrC, NqrD, NqrE and NqrF.

The protein localises to the cell inner membrane. The enzyme catalyses a ubiquinone + n Na(+)(in) + NADH + H(+) = a ubiquinol + n Na(+)(out) + NAD(+). In terms of biological role, NQR complex catalyzes the reduction of ubiquinone-1 to ubiquinol by two successive reactions, coupled with the transport of Na(+) ions from the cytoplasm to the periplasm. NqrA to NqrE are probably involved in the second step, the conversion of ubisemiquinone to ubiquinol. This is Na(+)-translocating NADH-quinone reductase subunit E from Yersinia pestis bv. Antiqua (strain Nepal516).